Here is a 191-residue protein sequence, read N- to C-terminus: Calcium-activated potassium channel subunit beta-1 (191 aa).

Residues 1–15 (MGKKLVMAQKRGETR) lie on the Cytoplasmic side of the membrane. Residues 16–36 (ALCLGVAMVMCAVIAYYILGT) traverse the membrane as a helical segment. The Extracellular portion of the chain corresponds to 37-157 (TMLPLYQKSV…YRRLYGPQTL (121 aa)). 2 N-linked (GlcNAc...) asparagine glycosylation sites follow: Asn80 and Asn142. A helical membrane pass occupies residues 158-178 (LFSLFWPTFLLTGGLLIIAMV). Topologically, residues 179 to 191 (KINQSLSILAAQR) are cytoplasmic.

This sequence belongs to the KCNMB (TC 8.A.14.1) family. KCNMB1 subfamily. Interacts with KCNMA1 tetramer. There are probably 4 molecules of KCMNB1 per KCNMA1 tetramer. In terms of processing, N-glycosylated.

The protein resides in the membrane. Regulatory subunit of the calcium activated potassium KCNMA1 (maxiK) channel. Modulates the calcium sensitivity and gating kinetics of KCNMA1, thereby contributing to KCNMA1 channel diversity. Increases the apparent Ca(2+)/voltage sensitivity of the KCNMA1 channel. It also modifies KCNMA1 channel kinetics and alters its pharmacological properties. It slows down the activation and the deactivation kinetics of the channel. Acts as a negative regulator of smooth muscle contraction by enhancing the calcium sensitivity to KCNMA1. Its presence is also a requirement for internal binding of the KCNMA1 channel opener dehydrosoyasaponin I (DHS-1) triterpene glycoside and for external binding of the agonist hormone 17-beta-estradiol (E2). Increases the binding activity of charybdotoxin (CTX) toxin to KCNMA1 peptide blocker by increasing the CTX association rate and decreasing the dissociation rate. The sequence is that of Calcium-activated potassium channel subunit beta-1 (KCNMB1) from Canis lupus familiaris (Dog).